A 368-amino-acid chain; its full sequence is Putative potassium channel KAT5 (368 aa).

Transmembrane regions (helical) follow at residues 33 to 53 (WWHM…PFEL), 97 to 117 (LLNL…ARVE), and 132 to 152 (LLCV…WMVF). Positions 180–199 (CAVYWSITTLATVGYGDLHA) form an intramembrane region, pore-forming. The chain crosses the membrane as a helical span at residues 206-226 (LFSIAFMLFNMGLTSYIIGNI). 225–344 (NITNLVVRET…CIVFSNFILV (120 aa)) contacts a nucleoside 3',5'-cyclic phosphate.

This sequence belongs to the potassium channel family. Plant (TC 1.A.1.4) subfamily.

It is found in the membrane. Putative inward-rectifying potassium channel. This is Putative potassium channel KAT5 from Oryza sativa subsp. japonica (Rice).